The primary structure comprises 720 residues: Portal protein (720 aa).

Belongs to the p22likevirus portal protein family. As to quaternary structure, homododecamer.

The protein resides in the virion. Forms the portal vertex of the capsid. This portal plays critical roles in head assembly, genome packaging, neck/tail attachment, and genome ejection. Procapsid assembly may initiate with a nucleation complex composed of portal and scaffolding proteins. The portal protein multimerizes as a single ring-shaped homododecamer arranged around a central channel. The protein is Portal protein (19) of Acyrthosiphon pisum secondary endosymbiont phage 1 (Bacteriophage APSE-1).